Reading from the N-terminus, the 640-residue chain is Protein SPT10 (640 aa).

The interval 1-30 (MLNQHTSSVPDDEHLQMAHQNSSSEVRNEA) is disordered. One can recognise an N-acetyltransferase domain in the interval 121 to 259 (LDYSMDTEAD…AGILKGFDVP (139 aa)). The interval 534-565 (PHLTNNESQDHANPVNRDERDMNHSVPDLDRN) is disordered. The segment covering 549 to 565 (NRDERDMNHSVPDLDRN) has biased composition (basic and acidic residues).

Required for normal transcription at a number of loci in yeast. Affects transcription at Ty1 elements, at PHO5, STE6 and ADH2. The sequence is that of Protein SPT10 (SPT10) from Saccharomyces cerevisiae (strain ATCC 204508 / S288c) (Baker's yeast).